A 77-amino-acid chain; its full sequence is Cold shock protein YdfK (77 aa).

To E.coli YnaE.

This chain is Cold shock protein YdfK (ydfK), found in Escherichia coli (strain K12).